Reading from the N-terminus, the 250-residue chain is Probable transcriptional regulatory protein RC1_1808 (250 aa).

The segment at 1 to 21 (MAGHSQFKNIMHRKGAQDAKR) is disordered.

This sequence belongs to the TACO1 family.

It localises to the cytoplasm. This is Probable transcriptional regulatory protein RC1_1808 from Rhodospirillum centenum (strain ATCC 51521 / SW).